Consider the following 386-residue polypeptide: Leupaxin (386 aa).

At Met-1 the chain carries N-acetylmethionine. The short motif at 3–15 (ELDALLEELERCT) is the LD motif 1 element. Ser-19 bears the Phosphoserine mark. Residues 19 to 52 (SEEYSNPVSCHLDQQSTEESKIPQTPKTLSSQGN) form a disordered region. Tyr-22 is modified (phosphotyrosine). Residues 22–52 (YSNPVSCHLDQQSTEESKIPQTPKTLSSQGN) show a composition bias toward polar residues. Residue Ser-54 is modified to Phosphoserine. Tyr-62 is modified (phosphotyrosine). 2 consecutive short sequence motifs (LD motif) follow at residues 70-82 (NVYS…KESV) and 92-103 (QLDELMAHLSEM). Phosphotyrosine; by LYN is present on Tyr-72. Ser-81 carries the post-translational modification Phosphoserine. LIM zinc-binding domains lie at 150 to 208 (GYCA…RLFS), 209 to 267 (PRCA…AMFS), 268 to 326 (PKCG…HRRG), and 327 to 386 (TLCH…LFSQ).

This sequence belongs to the paxillin family. In terms of assembly, interacts with unphosphorylated ITGA4. Interacts with AR and SRF. Interacts with PTK2B/PYK2, PTPN22 and PTPN12. Interacts (via LD motif 3) with LYN and the interaction is induced upon B-cell antigen receptor (BCR) activation. Interacts (via LD motif 3) with PTK2/FAK. In terms of processing, phosphorylated on tyrosine residues. Phosphorylation on Tyr-72 is important for its inhibitory function. Bombesin stimulates phosphorylation on Tyr-22, Tyr-62 and Tyr-72. In terms of tissue distribution, expressed in osteoclasts (at protein level). Highly expressed in vascular smooth muscle.

Its subcellular location is the cytoplasm. It localises to the cell junction. The protein resides in the focal adhesion. It is found in the nucleus. The protein localises to the perinuclear region. Its subcellular location is the cell projection. It localises to the podosome. The protein resides in the cell membrane. Functionally, transcriptional coactivator for androgen receptor (AR) and serum response factor (SRF). Contributes to the regulation of cell adhesion, spreading and cell migration and acts as a negative regulator in integrin-mediated cell adhesion events. Suppresses the integrin-induced tyrosine phosphorylation of paxillin (PXN). May play a critical role as an adapter protein in the formation of the adhesion zone in osteoclasts. Negatively regulates B-cell antigen receptor (BCR) signaling. In Mus musculus (Mouse), this protein is Leupaxin (Lpxn).